A 118-amino-acid polypeptide reads, in one-letter code: Small ribosomal subunit protein uS13 (118 aa).

Residues 94–118 (GLPLRGQRTKTNARTRKGPRKPIKK) are disordered.

This sequence belongs to the universal ribosomal protein uS13 family. As to quaternary structure, part of the 30S ribosomal subunit. Forms a loose heterodimer with protein S19. Forms two bridges to the 50S subunit in the 70S ribosome.

In terms of biological role, located at the top of the head of the 30S subunit, it contacts several helices of the 16S rRNA. In the 70S ribosome it contacts the 23S rRNA (bridge B1a) and protein L5 of the 50S subunit (bridge B1b), connecting the 2 subunits; these bridges are implicated in subunit movement. Contacts the tRNAs in the A and P-sites. The sequence is that of Small ribosomal subunit protein uS13 from Cellvibrio japonicus (strain Ueda107) (Pseudomonas fluorescens subsp. cellulosa).